The following is a 586-amino-acid chain: Glutathione S-transferase C-terminal domain-containing protein homolog (586 aa).

The GST C-terminal domain occupies 121–276 (LGFKESCLLA…GTCAKILGDL (156 aa)).

The protein belongs to the GSTCD family.

The chain is Glutathione S-transferase C-terminal domain-containing protein homolog from Drosophila pseudoobscura pseudoobscura (Fruit fly).